A 983-amino-acid chain; its full sequence is ER membrane protein complex subunit 1 (983 aa).

An N-terminal signal peptide occupies residues 1 to 16; sequence MAAGLWALLLPLAAAV. The Lumenal segment spans residues 17–952; the sequence is YEDQVGKFDW…FDVLKDDYDY (936 aa). A disulfide bond links Cys221 and Cys231. A glycan (N-linked (GlcNAc...) asparagine) is linked at Asn279. A disulfide bond links Cys332 and Cys360. N-linked (GlcNAc...) asparagine glycosylation is found at Asn362, Asn808, and Asn903. The chain crosses the membrane as a helical span at residues 953–973; the sequence is VLISSVLFGLVFATMITKRLA. Over 974–983 the chain is Cytoplasmic; it reads QVKLLNRAWR.

It belongs to the EMC1 family. In terms of assembly, component of the ER membrane protein complex (EMC).

It is found in the endoplasmic reticulum membrane. Functionally, part of the endoplasmic reticulum membrane protein complex (EMC) that enables the energy-independent insertion into endoplasmic reticulum membranes of newly synthesized membrane proteins. Preferentially accommodates proteins with transmembrane domains that are weakly hydrophobic or contain destabilizing features such as charged and aromatic residues. Involved in the cotranslational insertion of multi-pass membrane proteins in which stop-transfer membrane-anchor sequences become ER membrane spanning helices. It is also required for the post-translational insertion of tail-anchored/TA proteins in endoplasmic reticulum membranes. By mediating the proper cotranslational insertion of N-terminal transmembrane domains in an N-exo topology, with translocated N-terminus in the lumen of the ER, controls the topology of multi-pass membrane proteins like the G protein-coupled receptors. By regulating the insertion of various proteins in membranes, it is indirectly involved in many cellular processes. This Gallus gallus (Chicken) protein is ER membrane protein complex subunit 1 (EMC1).